We begin with the raw amino-acid sequence, 431 residues long: Shaggy-related protein kinase beta (431 aa).

The span at 12-24 (SGRNFVSSDNVGE) shows a compositional bias: polar residues. A disordered region spans residues 12–65 (SGRNFVSSDNVGETETPRSKPNQNREETESTETTSYEKDSVSSSENSDHLPKEI). Composition is skewed to basic and acidic residues over residues 26–39 (ETPR…REET) and 46–65 (SYEK…PKEI). A Protein kinase domain is found at 102–386 (YRAEHVIGTG…ALEACAHPFF (285 aa)). ATP contacts are provided by residues 108 to 116 (IGTGSFGVV) and lysine 131. Aspartate 227 (proton acceptor) is an active-site residue. The residue at position 262 (tyrosine 262) is a Phosphotyrosine.

It belongs to the protein kinase superfamily. CMGC Ser/Thr protein kinase family. GSK-3 subfamily. Post-translationally, autophosphorylated mainly on threonine and serine residues.

It carries out the reaction L-seryl-[protein] + ATP = O-phospho-L-seryl-[protein] + ADP + H(+). It catalyses the reaction L-threonyl-[protein] + ATP = O-phospho-L-threonyl-[protein] + ADP + H(+). May mediate extracellular signals to regulate transcription in differentiating cells. The chain is Shaggy-related protein kinase beta from Arabidopsis thaliana (Mouse-ear cress).